The chain runs to 112 residues: uncharacterized protein (112 aa).

Ser-51 and Ser-53 each carry phosphoserine. A helical transmembrane segment spans residues 90–110 (FIFTLSMFLIAFILLIAFVSF).

Its subcellular location is the golgi apparatus membrane. It localises to the endoplasmic reticulum membrane. This is an uncharacterized protein from Schizosaccharomyces pombe (strain 972 / ATCC 24843) (Fission yeast).